Consider the following 213-residue polypeptide: Serine protease inhibitor 5 (213 aa).

The first 22 residues, Met1–Thr22, serve as a signal peptide directing secretion. The propeptide occupies Ser23–Asn28. Positions Asn25–Pro30 match the Vacuolar targeting signal motif. 2 cysteine pairs are disulfide-bonded: Cys76/Cys125 and Cys174/Cys183.

This sequence belongs to the protease inhibitor I3 (leguminous Kunitz-type inhibitor) family.

It localises to the vacuole. Inhibitor of trypsin (serine protease). Protects the plant by inhibiting proteases of invading organisms. The chain is Serine protease inhibitor 5 from Solanum tuberosum (Potato).